The following is a 189-amino-acid chain: GTP cyclohydrolase 1 (189 aa).

Cys-80, His-83, and Cys-152 together coordinate Zn(2+).

The protein belongs to the GTP cyclohydrolase I family. Toroid-shaped homodecamer, composed of two pentamers of five dimers.

It carries out the reaction GTP + H2O = 7,8-dihydroneopterin 3'-triphosphate + formate + H(+). It participates in cofactor biosynthesis; 7,8-dihydroneopterin triphosphate biosynthesis; 7,8-dihydroneopterin triphosphate from GTP: step 1/1. The polypeptide is GTP cyclohydrolase 1 (Latilactobacillus sakei subsp. sakei (strain 23K) (Lactobacillus sakei subsp. sakei)).